Consider the following 230-residue polypeptide: Cytidylate kinase (230 aa).

12–20 contacts ATP; it reads GPSGAGKGT.

Belongs to the cytidylate kinase family. Type 1 subfamily.

It localises to the cytoplasm. It catalyses the reaction CMP + ATP = CDP + ADP. The catalysed reaction is dCMP + ATP = dCDP + ADP. The protein is Cytidylate kinase of Aeromonas salmonicida (strain A449).